The following is a 1489-amino-acid chain: ABC transporter FUM19 (1489 aa).

The next 10 membrane-spanning stretches (helical) occupy residues 33–53, 84–104, 116–136, 143–163, 264–284, 302–322, 373–393, 397–417, 482–502, and 511–531; these read IIFFIAPSCVFTALTFVRIFV, CFSSSQVLGLVAGMTTAALSY, LLSIYLFLSLLLDIAHDRTLW, LEYGFSSVFSAAVAIKAFAVW, LLLPVLPRIALIGLSLAQAFL, WGLIGATVLIYGGISICTSLY, FLNLHELWANIVEAGLAAWFL, VGIAFIAPIGLVLLSFLGVSI, IASLIIAFAPDLTAPGIMLAA, and HKVYTAIALLTLLTVPLGSIF. In terms of domain architecture, ABC transmembrane type-1 1 spans 272 to 539; sequence IALIGLSLAQ…IFRSVSPLMS (268 aa). The 233-residue stretch at 591–823 folds into the ABC transporter 1 domain; it reads VKVIQASFGW…YQSHLQSLCI (233 aa). 2 N-linked (GlcNAc...) asparagine glycosylation sites follow: asparagine 612 and asparagine 616. 625-632 provides a ligand contact to ATP; it reads GPVGSGKS. N-linked (GlcNAc...) asparagine glycosylation is present at asparagine 670. Basic and acidic residues predominate over residues 852–862; it reads EQTRSSRRGAD. The interval 852-874 is disordered; that stretch reads EQTRSSRRGADNQETIASGADSS. Polar residues predominate over residues 863–874; it reads NQETIASGADSS. The next 6 membrane-spanning stretches (helical) occupy residues 890–910, 945–965, 977–999, 1031–1051, 1120–1140, and 1149–1169; these read AVPPVAIISFVTSSLSYGFLY, ILALLSELLTMYLALTYFALI, AITRAPLYFFASVDLGTITNYFS, AASSPYLAASYPLCFFLLYFV, WLLFILNTFVSLLALFTVALV, and GFAGAGLISLMQIGQFLTNVV. In terms of domain architecture, ABC transmembrane type-1 2 spans 902 to 1187; the sequence is SSLSYGFLYS…SMGAVSRLKA (286 aa). The 272-residue stretch at 1214–1485 folds into the ABC transporter 2 domain; that stretch reads IKIDGVSASY…KEGKFRALWE (272 aa). Residue 1254–1261 coordinates ATP; that stretch reads GRTGSGKS.

Belongs to the ABC transporter superfamily. ABCC family. Conjugate transporter (TC 3.A.1.208) subfamily.

Its subcellular location is the cell membrane. ABC transporter that may provide the dual role of fumonisin export and self-protection by allowing the fungus to evade the harmful effect of its own fumonisin production. Plays a role in the repression of the gene cluster that mediates fumonisin biosynthesis. This is ABC transporter FUM19 from Gibberella moniliformis (strain M3125 / FGSC 7600) (Maize ear and stalk rot fungus).